Here is a 395-residue protein sequence, read N- to C-terminus: Forkhead box protein I3 (395 aa).

The segment at residues 131-225 (RPPYSYSALI…DNGNFRRKRK (95 aa)) is a DNA-binding region (fork-head). Disordered stretches follow at residues 216 to 288 (DNGN…GIIS) and 322 to 370 (RNFS…SSGS). The Nuclear localization signal motif lies at 221–227 (RRKRKRR). Low complexity predominate over residues 234 to 245 (ATTAAASSLGGL). Positions 325–335 (SAGQLSGGTFT) are enriched in polar residues. Positions 336 to 349 (PSSSSSQEVPSPEQ) are enriched in low complexity.

As to expression, initially expressed in the pre-placodal ectoderm surrounding the neural plate, which will give rise to all craniofacial sensory organs. Expression then becomes restricted to a region immediately anterior to the first pair of somites that will give rise to the otic and epibranchial placodes, before becoming down-regulated from this region and restricted to the ectoderm and endoderm of the pharyngeal arches.

It localises to the nucleus. Transcription factor required for pharyngeal arch development, which is involved in otic placode development. The chain is Forkhead box protein I3 from Gallus gallus (Chicken).